The chain runs to 442 residues: Syndecan-3 (442 aa).

Disordered regions lie at residues 1–25 and 55–85; these read MKPG…GPGA and RPVD…SGYF. A signal peptide spans 1 to 44; the sequence is MKPGPPRRGTAQGQRVDTATHGPGARGLLLPPLLLLLLAGRAAG. At 45 to 387 the chain is on the extracellular side; that stretch reads AQRWRNENFE…SILERKEVLV (343 aa). A compositionally biased stretch (acidic residues) spans 61–75; sequence GSGDDDSFPDDELDD. Serine 78, serine 80, serine 82, and serine 89 each carry an O-linked (Xyl...) (glycosaminoglycan) serine glycan. An O-linked (GalNAc) threonine; by GALNT13 glycan is attached at threonine 107. Disordered stretches follow at residues 151–175, 180–199, 225–244, 252–327, and 339–372; these read EEPS…TGAP, APAT…PATA, ATTP…DTEA, TATS…TTQP, and AAAK…SSAA. Residues 157–175 show a composition bias toward low complexity; sequence ATTISTTTSTTAATTTGAP. Serine 161 carries O-linked (GalNAc) serine; by GALNT13 glycosylation. O-linked (GalNAc) threonine; by GALNT13 glycans are attached at residues threonine 162, threonine 163, threonine 170, and threonine 172. Residues 276–287 show a composition bias toward low complexity; the sequence is TLPLGTTAPGPT. Residues 289-303 are compositionally biased toward polar residues; that stretch reads VAQTPTPESLLTTTQ. 2 O-linked (Xyl...) (glycosaminoglycan) serine glycosylation sites follow: serine 315 and serine 367. Residues 388–408 form a helical membrane-spanning segment; that stretch reads AVIVGGVVGALFAAFLVTLLI. Residues tyrosine 409, tyrosine 419, tyrosine 431, and tyrosine 441 each carry the phosphotyrosine modification. At 409-442 the chain is on the cytoplasmic side; sequence YRMKKKDEGSYTLEEPKQASVTYQKPDKQEEFYA. A disordered region spans residues 419–442; the sequence is YTLEEPKQASVTYQKPDKQEEFYA. Residues 433–442 show a composition bias toward basic and acidic residues; it reads KPDKQEEFYA.

This sequence belongs to the syndecan proteoglycan family. Interacts with TIAM1. Interacts (via heparan sulfate chains) with PTN; this interaction mediates the neurite outgrowth-promoting signal from PTN to the cytoskeleton of growing neurites; this interaction mediates osteoblast recruitment. Interacts with MDK; this interaction induces SDC3 clustering; this interaction induces neuronal cell adhesion and neurite outgrowth. O-glycosylated within the Thr/Ser-rich region which could interact with lectin domains on other molecules. High levels in neonatal brain, heart, and Schwann cells, barely detectable in neonatal or adult liver, or adult brain.

Its subcellular location is the cell membrane. In terms of biological role, cell surface proteoglycan that may bear heparan sulfate. May have a role in the organization of cell shape by affecting the actin cytoskeleton, possibly by transferring signals from the cell surface in a sugar-dependent mechanism. The chain is Syndecan-3 (Sdc3) from Rattus norvegicus (Rat).